Here is a 473-residue protein sequence, read N- to C-terminus: Glycine--tRNA ligase (473 aa).

Positions 101 and 172 each coordinate substrate. Residues 204–206, 214–219, 289–290, and 333–336 each bind ATP; these read RNE, FRTREF, EL, and GVER. Residue 219–223 coordinates substrate; the sequence is FEQME. Substrate is bound at residue 329-333; the sequence is EPSVG.

The protein belongs to the class-II aminoacyl-tRNA synthetase family. Homodimer.

The protein localises to the cytoplasm. It catalyses the reaction tRNA(Gly) + glycine + ATP = glycyl-tRNA(Gly) + AMP + diphosphate. Functionally, catalyzes the attachment of glycine to tRNA(Gly). The sequence is that of Glycine--tRNA ligase from Ureaplasma urealyticum serovar 10 (strain ATCC 33699 / Western).